A 136-amino-acid polypeptide reads, in one-letter code: Selenoprotein M (136 aa).

Residues 1–19 (MWLPLPLLLGLLQLQPILS) form the signal peptide. Catalysis depends on nucleophile residues cysteine 38 and selenocysteine 41. The segment at residues 38 to 41 (CGGU) is a cross-link (cysteinyl-selenocysteine (Cys-Sec)). Position 41 (selenocysteine 41) is a non-standard amino acid, selenocysteine. The tract at residues 111-136 (SSPDAPVPAEFKMAPARASGDTKEDL) is disordered. The Prevents secretion from ER motif lies at 133–136 (KEDL).

It belongs to the selenoprotein M/F family.

It localises to the endoplasmic reticulum. Functionally, may function as a thiol-disulfide oxidoreductase that participates in disulfide bond formation. This is Selenoprotein M (selenom) from Xenopus laevis (African clawed frog).